We begin with the raw amino-acid sequence, 354 residues long: Guanine nucleotide-binding protein G(i) subunit alpha-1 (354 aa).

Gly2 is lipidated: N-myristoyl glycine. Cys3 carries S-palmitoyl cysteine lipidation. The 323-residue stretch at 32–354 (REVKLLLLGA…KNNLKDCGLF (323 aa)) folds into the G-alpha domain. The G1 motif stretch occupies residues 35–48 (KLLLLGAGESGKST). Residues 43 to 48 (ESGKST), 150 to 151 (DS), and 175 to 178 (LRTR) contribute to the GTP site. Ser47 is a binding site for Mg(2+). Residues 173-181 (DVLRTRVKT) form a G2 motif region. Thr181 lines the Mg(2+) pocket. The segment at 196 to 205 (FKMFDVGGQR) is G3 motif. Residues 200–204 (DVGGQ), 269–272 (NKKD), and Ala326 contribute to the GTP site. A G4 motif region spans residues 265 to 272 (ILFLNKKD). A G5 motif region spans residues 324-329 (TCATDT).

This sequence belongs to the G-alpha family. G(i/o/t/z) subfamily. In terms of assembly, heterotrimeric G proteins are composed of 3 units; alpha, beta and gamma. The alpha chain contains the guanine nucleotide binding site. Part of a spindle orientation complex. Identified in complex with the beta subunit GNB1 and the gamma subunit GNG1. Identified in complex with the beta subunit GNB1 and the gamma subunit GNG2. GTP binding causes dissociation of the heterotrimer, liberating the individual subunits so that they can interact with downstream effector proteins. In terms of processing, myristoylation at Gly-2 is required for membrane anchoring before palmitoylation. Post-translationally, palmitoylation at Cys-3 varies with membrane lipid composition.

It is found in the nucleus. It localises to the cytoplasm. Its subcellular location is the cell membrane. The protein localises to the cytoskeleton. The protein resides in the microtubule organizing center. It is found in the centrosome. It localises to the cell cortex. Its subcellular location is the membrane. It catalyses the reaction GTP + H2O = GDP + phosphate + H(+). Guanine nucleotide-binding proteins (G proteins) function as transducers downstream of G protein-coupled receptors (GPCRs) in numerous signaling cascades. The alpha chain contains the guanine nucleotide binding site and alternates between an active, GTP-bound state and an inactive, GDP-bound state. Signaling by an activated GPCR promotes GDP release and GTP binding. The alpha subunit has a low GTPase activity that converts bound GTP to GDP, thereby terminating the signal. Both GDP release and GTP hydrolysis are modulated by numerous regulatory proteins. Signaling is mediated via effector proteins, such as adenylate cyclase. Inhibits adenylate cyclase activity, leading to decreased intracellular cAMP levels. Required for cortical dynein-dynactin complex recruitment during metaphase. The sequence is that of Guanine nucleotide-binding protein G(i) subunit alpha-1 (gnai1) from Xenopus laevis (African clawed frog).